We begin with the raw amino-acid sequence, 200 residues long: Holliday junction branch migration complex subunit RuvA (200 aa).

The segment at 1–63 (MIASVRGEVL…EDSMTLYGFP (63 aa)) is domain I. Residues 64–142 (DSESKELFGL…AVASTSGAVP (79 aa)) are domain II. The segment at 142 to 146 (PLGAG) is flexible linker. Positions 147 to 200 (GGGSVRDQIVEALVGLGFPAKQAEQAADSVLAEAPESTTSTALRSALSLLGKTR) are domain III.

The protein belongs to the RuvA family. Homotetramer. Forms an RuvA(8)-RuvB(12)-Holliday junction (HJ) complex. HJ DNA is sandwiched between 2 RuvA tetramers; dsDNA enters through RuvA and exits via RuvB. An RuvB hexamer assembles on each DNA strand where it exits the tetramer. Each RuvB hexamer is contacted by two RuvA subunits (via domain III) on 2 adjacent RuvB subunits; this complex drives branch migration. In the full resolvosome a probable DNA-RuvA(4)-RuvB(12)-RuvC(2) complex forms which resolves the HJ.

It localises to the cytoplasm. In terms of biological role, the RuvA-RuvB-RuvC complex processes Holliday junction (HJ) DNA during genetic recombination and DNA repair, while the RuvA-RuvB complex plays an important role in the rescue of blocked DNA replication forks via replication fork reversal (RFR). RuvA specifically binds to HJ cruciform DNA, conferring on it an open structure. The RuvB hexamer acts as an ATP-dependent pump, pulling dsDNA into and through the RuvAB complex. HJ branch migration allows RuvC to scan DNA until it finds its consensus sequence, where it cleaves and resolves the cruciform DNA. The sequence is that of Holliday junction branch migration complex subunit RuvA from Rhodococcus jostii (strain RHA1).